Here is a 210-residue protein sequence, read N- to C-terminus: CLAVATA3/ESR (CLE)-related protein 4D (210 aa).

The signal sequence occupies residues 1–21 (MAKNAMLCLLILSVVLALAFA). Residues 21-83 (ATNKKDDEEP…SNQLPNNNWM (63 aa)) are required for secretion from the host cytoplasm to the host apoplasm. 2 N-linked (GlcNAc...) asparagine glycosylation sites follow: asparagine 32 and asparagine 59. The tract at residues 115 to 210 (RRKTGTHSQR…APAGPDPIHH (96 aa)) is disordered. 4 stretches are compositionally biased toward basic and acidic residues: residues 125–137 (HHEE…EKRG), 144–158 (PIHH…EKRG), 165–179 (PIHH…EKRV), and 186–200 (PIHH…EKRG). An A-1 repeat occupies 127–135 (EETTLEQEK). Residues 129-198 (TTLEQEKRGA…HQDTKFEQEK (70 aa)) form a 4 X approximate repeat A region. One copy of the CLE-1 repeat lies at 136-147 (RGAPAGPDPIHH). A 4 X approximate repeat CLE region spans residues 136–210 (RGAPAGPDPI…APAGPDPIHH (75 aa)). An A-2 repeat occupies 148 to 156 (QDTTFEQEK). The CLE-2 repeat unit spans residues 157–168 (RGAPAGPDPIHH). An A-3 repeat occupies 169–177 (QDTTLEQEK). The stretch at 178–189 (RVAGAGPDPIHH) is one CLE-3 repeat. Residues 190-198 (QDTKFEQEK) form an A-4 repeat. One copy of the CLE-4 repeat lies at 199-210 (RGAPAGPDPIHH).

The protein belongs to the CLV3/ESR signal peptide family. Highly expressed exclusively within the dorsal esophageal gland cell during syncytium formation in host plants.

The protein resides in the secreted. The protein localises to the host cytoplasm. It is found in the host extracellular space. Its subcellular location is the extracellular space. It localises to the apoplast. Mimics host plant CLE extracellular signal peptides that regulate cell fate. May play a role in the differentiation or division of feeding cells (syncytia) induced in plant roots during infection. The chain is CLAVATA3/ESR (CLE)-related protein 4D (CLE-4D) from Globodera rostochiensis (Golden nematode worm).